An 838-amino-acid polypeptide reads, in one-letter code: Leucine--tRNA ligase (838 aa).

Positions 38–48 match the 'HIGH' region motif; sequence PYPSGKAHVGH. The short motif at 608–612 is the 'KMSKS' region element; sequence KMSKS. K611 provides a ligand contact to ATP.

It belongs to the class-I aminoacyl-tRNA synthetase family.

It localises to the cytoplasm. It carries out the reaction tRNA(Leu) + L-leucine + ATP = L-leucyl-tRNA(Leu) + AMP + diphosphate. The protein is Leucine--tRNA ligase of Orientia tsutsugamushi (strain Boryong) (Rickettsia tsutsugamushi).